Consider the following 717-residue polypeptide: Aryl hydrocarbon receptor nuclear translocator 2 (717 aa).

Disordered stretches follow at residues 1–20 (MATPAAVNPPEMASDIPGSV) and 35–74 (MAGAMPARGGKRRSGMDFDDEDGEGPSKFSRENHSEIERR). Omega-N-methylarginine is present on R42. Over residues 63–73 (FSRENHSEIER) the composition is skewed to basic and acidic residues. The bHLH domain maps to 63 to 116 (FSRENHSEIERRRRNKMTQYITELSDMVPTCSALARKPDKLTILRMAVSHMKSM). 2 PAS domains span residues 134 to 209 (TEQE…MTGR) and 323 to 393 (PVCM…VKLK). Residues 398–441 (SVMYRFRTKNREWMLIRTSSFTFQNPYSDEIEYIICTNTNVKQL) form the PAC domain. The disordered stretch occupies residues 548 to 717 (NDIQSSSSTG…DLGMFPPFSE (170 aa)). Polar residues-rich tracts occupy residues 549–574 (DIQSSSSTGQNMSQISRQLNQSQVAW) and 585–605 (QIPSQSSKTQSSPFGIGTSHT). The segment covering 610–625 (PSSYSPLSSPATSSPS) has biased composition (low complexity). A compositionally biased stretch (polar residues) spans 642 to 651 (SGQSSGQFQG). Residues 658–680 (SQWQSQHHGQQSGEQHSHQQPGQ) are compositionally biased toward low complexity.

Efficient DNA binding requires dimerization with another bHLH protein. Heterodimer with NPAS4. Heterodimer with SIM1. Heterodimer with the aryl hydrocarbon receptor (AHR) or the SIM1 protein. Interacts with TACC3.

The protein resides in the nucleus. Functionally, transcription factor that plays a role in the development of the hypothalamo-pituitary axis, postnatal brain growth, and visual and renal function. Specifically recognizes the xenobiotic response element (XRE). The sequence is that of Aryl hydrocarbon receptor nuclear translocator 2 (ARNT2) from Homo sapiens (Human).